The following is a 156-amino-acid chain: Small ribosomal subunit protein uS7 (156 aa).

This sequence belongs to the universal ribosomal protein uS7 family. Part of the 30S ribosomal subunit. Contacts proteins S9 and S11.

Its function is as follows. One of the primary rRNA binding proteins, it binds directly to 16S rRNA where it nucleates assembly of the head domain of the 30S subunit. Is located at the subunit interface close to the decoding center, probably blocks exit of the E-site tRNA. The sequence is that of Small ribosomal subunit protein uS7 from Salinispora tropica (strain ATCC BAA-916 / DSM 44818 / JCM 13857 / NBRC 105044 / CNB-440).